Reading from the N-terminus, the 349-residue chain is GTP 3',8-cyclase (349 aa).

The region spanning 24–250 is the Radical SAM core domain; the sequence is PFGRAVTYLR…DIPYRTGGPA (227 aa). Residue R33 participates in GTP binding. Positions 40 and 44 each coordinate [4Fe-4S] cluster. Residue Y46 participates in S-adenosyl-L-methionine binding. C47 contacts [4Fe-4S] cluster. R82 is a GTP binding site. G86 lines the S-adenosyl-L-methionine pocket. A GTP-binding site is contributed by T116. Residue S140 coordinates S-adenosyl-L-methionine. Residue K176 coordinates GTP. M210 is an S-adenosyl-L-methionine binding site. Residues C273 and C276 each coordinate [4Fe-4S] cluster. 278–280 contributes to the GTP binding site; that stretch reads RVR. A [4Fe-4S] cluster-binding site is contributed by C290.

It belongs to the radical SAM superfamily. MoaA family. In terms of assembly, monomer and homodimer. [4Fe-4S] cluster serves as cofactor.

It catalyses the reaction GTP + AH2 + S-adenosyl-L-methionine = (8S)-3',8-cyclo-7,8-dihydroguanosine 5'-triphosphate + 5'-deoxyadenosine + L-methionine + A + H(+). It functions in the pathway cofactor biosynthesis; molybdopterin biosynthesis. Its function is as follows. Catalyzes the cyclization of GTP to (8S)-3',8-cyclo-7,8-dihydroguanosine 5'-triphosphate. The sequence is that of GTP 3',8-cyclase from Rhizobium meliloti (strain 1021) (Ensifer meliloti).